Reading from the N-terminus, the 632-residue chain is 1-deoxy-D-xylulose-5-phosphate synthase (632 aa).

Thiamine diphosphate-binding positions include His-79 and 120–122 (GHA). Position 152 (Asp-152) interacts with Mg(2+). Thiamine diphosphate-binding positions include 153-154 (GA), Asn-181, Phe-293, and Glu-377. Asn-181 is a Mg(2+) binding site.

It belongs to the transketolase family. DXPS subfamily. In terms of assembly, homodimer. It depends on Mg(2+) as a cofactor. Thiamine diphosphate is required as a cofactor.

It catalyses the reaction D-glyceraldehyde 3-phosphate + pyruvate + H(+) = 1-deoxy-D-xylulose 5-phosphate + CO2. The protein operates within metabolic intermediate biosynthesis; 1-deoxy-D-xylulose 5-phosphate biosynthesis; 1-deoxy-D-xylulose 5-phosphate from D-glyceraldehyde 3-phosphate and pyruvate: step 1/1. Functionally, catalyzes the acyloin condensation reaction between C atoms 2 and 3 of pyruvate and glyceraldehyde 3-phosphate to yield 1-deoxy-D-xylulose-5-phosphate (DXP). In Parabacteroides distasonis (strain ATCC 8503 / DSM 20701 / CIP 104284 / JCM 5825 / NCTC 11152), this protein is 1-deoxy-D-xylulose-5-phosphate synthase.